We begin with the raw amino-acid sequence, 247 residues long: tRNA pseudouridine synthase A (247 aa).

Catalysis depends on aspartate 52, which acts as the Nucleophile. Tyrosine 113 is a substrate binding site.

This sequence belongs to the tRNA pseudouridine synthase TruA family. Homodimer.

The catalysed reaction is uridine(38/39/40) in tRNA = pseudouridine(38/39/40) in tRNA. Formation of pseudouridine at positions 38, 39 and 40 in the anticodon stem and loop of transfer RNAs. The polypeptide is tRNA pseudouridine synthase A (Bartonella quintana (strain Toulouse) (Rochalimaea quintana)).